The chain runs to 413 residues: Histidine--tRNA ligase (413 aa).

This sequence belongs to the class-II aminoacyl-tRNA synthetase family. As to quaternary structure, homodimer.

Its subcellular location is the cytoplasm. The catalysed reaction is tRNA(His) + L-histidine + ATP = L-histidyl-tRNA(His) + AMP + diphosphate + H(+). The sequence is that of Histidine--tRNA ligase from Geobacter metallireducens (strain ATCC 53774 / DSM 7210 / GS-15).